The primary structure comprises 76 residues: Conotoxin VnMKLT2-013 (76 aa).

An N-terminal signal peptide occupies residues 1–23 (MMKLTCVLIIAVLFLTACQLTTA). Residues 24 to 42 (ETRDEYRAVRSSDEVQNSR) constitute a propeptide that is removed on maturation. Residues 29–49 (YRAVRSSDEVQNSRSTDDCST) form a disordered region. Intrachain disulfides connect Cys-47–Cys-58, Cys-52–Cys-63, and Cys-57–Cys-72.

Belongs to the conotoxin O1 superfamily. In terms of tissue distribution, expressed by the venom duct.

The protein resides in the secreted. In Conus ventricosus (Mediterranean cone), this protein is Conotoxin VnMKLT2-013.